The sequence spans 405 residues: uncharacterized protein (405 aa).

13 helical membrane passes run 19–39 (IVSI…PLAV), 48–68 (MGFS…ATLL), 85–105 (IVVF…LADI), 106–126 (ASAW…ILGI), 129–149 (SFAG…LHIG), 156–176 (GIVT…CYAW), 178–198 (GLQG…LLAL), 224–244 (GMAL…ITLF), 252–272 (GAAF…LLFP), 283–303 (VAMI…TAAM), 309–329 (IGVL…GVVA), 344–364 (TYTV…GLVM), and 366–386 (WAGV…ALLL).

Belongs to the major facilitator superfamily. YhhS family.

It is found in the cell inner membrane. This is an uncharacterized protein from Salmonella enteritidis PT4 (strain P125109).